The following is a 256-amino-acid chain: Venom allergen-1 (256 aa).

The first 21 residues, methionine 1–alanine 21, serve as a signal peptide directing secretion. In terms of domain architecture, SCP spans leucine 65–tyrosine 211. N-linked (GlcNAc...) asparagine glycans are attached at residues asparagine 146 and asparagine 210.

Belongs to the CRISP family.

The protein localises to the secreted. Activates autophagy in human monocytic cells, dendritic cells and macrophages. Its function is as follows. (Microbial infection) Promotes Zika virus replication in human dendritic cells and macrophages. Facilitates Zika virus transmission from infected mosquitoes to the host in mouse model. This Aedes albopictus (Asian tiger mosquito) protein is Venom allergen-1.